We begin with the raw amino-acid sequence, 318 residues long: Phosphatidylglycerol--prolipoprotein diacylglyceryl transferase (318 aa).

Helical transmembrane passes span 23 to 43 (PLTIRFYALCILAGIVIGAWL), 59 to 79 (MDIIMWAVPFGIVGGRLYHVI), 98 to 118 (IWEGGLGIWGAVAVGLAGAAI), 124 to 146 (GVRLATFADAAAPGLLLAQAMGR), 192 to 212 (FQPTFLYESLWCLAAAALLVF), 219 to 239 (LGAGSVFALYVVLYTAGRFIF), and 253 to 273 (LRVNTWVSALLFLAALAVFLI). Residue arginine 146 participates in a 1,2-diacyl-sn-glycero-3-phospho-(1'-sn-glycerol) binding. Basic and acidic residues predominate over residues 293-312 (FDTRANGHDPEKHDETDGKG). A disordered region spans residues 293–318 (FDTRANGHDPEKHDETDGKGNRHHVP).

It belongs to the Lgt family.

It is found in the cell membrane. It catalyses the reaction L-cysteinyl-[prolipoprotein] + a 1,2-diacyl-sn-glycero-3-phospho-(1'-sn-glycerol) = an S-1,2-diacyl-sn-glyceryl-L-cysteinyl-[prolipoprotein] + sn-glycerol 1-phosphate + H(+). It participates in protein modification; lipoprotein biosynthesis (diacylglyceryl transfer). In terms of biological role, catalyzes the transfer of the diacylglyceryl group from phosphatidylglycerol to the sulfhydryl group of the N-terminal cysteine of a prolipoprotein, the first step in the formation of mature lipoproteins. The sequence is that of Phosphatidylglycerol--prolipoprotein diacylglyceryl transferase from Paenarthrobacter aurescens (strain TC1).